Consider the following 510-residue polypeptide: 2,3-bisphosphoglycerate-independent phosphoglycerate mutase (510 aa).

Residues aspartate 14 and serine 64 each contribute to the Mn(2+) site. The Phosphoserine intermediate role is filled by serine 64. Residues histidine 125, 155 to 156 (RD), arginine 187, arginine 193, 259 to 262 (RADR), and lysine 332 each bind substrate. Mn(2+)-binding residues include aspartate 399, histidine 403, aspartate 440, histidine 441, and histidine 459.

This sequence belongs to the BPG-independent phosphoglycerate mutase family. In terms of assembly, monomer. Mn(2+) is required as a cofactor.

The enzyme catalyses (2R)-2-phosphoglycerate = (2R)-3-phosphoglycerate. Its pathway is carbohydrate degradation; glycolysis; pyruvate from D-glyceraldehyde 3-phosphate: step 3/5. In terms of biological role, catalyzes the interconversion of 2-phosphoglycerate and 3-phosphoglycerate. This is 2,3-bisphosphoglycerate-independent phosphoglycerate mutase from Pseudomonas savastanoi pv. phaseolicola (strain 1448A / Race 6) (Pseudomonas syringae pv. phaseolicola (strain 1448A / Race 6)).